A 415-amino-acid polypeptide reads, in one-letter code: ATP-dependent RNA helicase RhlB (415 aa).

A Q motif motif is present at residues 9–37 (KKFSDFALYPPIVEVLDSKGFNNCTPIQA). The Helicase ATP-binding domain occupies 40-219 (LPTTLAGKDV…FEHMNNAEYV (180 aa)). Position 53–60 (53–60 (AQTGTGKT)) interacts with ATP. The DEAD box motif lies at 165-168 (DEAD). The 146-residue stretch at 245–390 (RLLQTLIEEE…VSKYNSDALL (146 aa)) folds into the Helicase C-terminal domain. Residues 396-415 (PKRLTRRRSGAPRHNRKRPG) are disordered. Residues 398-415 (RLTRRRSGAPRHNRKRPG) are compositionally biased toward basic residues.

It belongs to the DEAD box helicase family. RhlB subfamily. In terms of assembly, component of the RNA degradosome, which is a multiprotein complex involved in RNA processing and mRNA degradation.

Its subcellular location is the cytoplasm. The enzyme catalyses ATP + H2O = ADP + phosphate + H(+). Its function is as follows. DEAD-box RNA helicase involved in RNA degradation. Has RNA-dependent ATPase activity and unwinds double-stranded RNA. The sequence is that of ATP-dependent RNA helicase RhlB from Sodalis glossinidius (strain morsitans).